The primary structure comprises 201 residues: 3-isopropylmalate dehydratase small subunit (201 aa).

This sequence belongs to the LeuD family. LeuD type 1 subfamily. Heterodimer of LeuC and LeuD.

The catalysed reaction is (2R,3S)-3-isopropylmalate = (2S)-2-isopropylmalate. It participates in amino-acid biosynthesis; L-leucine biosynthesis; L-leucine from 3-methyl-2-oxobutanoate: step 2/4. In terms of biological role, catalyzes the isomerization between 2-isopropylmalate and 3-isopropylmalate, via the formation of 2-isopropylmaleate. The protein is 3-isopropylmalate dehydratase small subunit of Shewanella sp. (strain MR-4).